A 512-amino-acid polypeptide reads, in one-letter code: Serine/threonine-protein kinase grp (512 aa).

The Protein kinase domain occupies 22–279 (WTLAQTLGEG…LEKTLDHKWC (258 aa)). Residues 28 to 36 (LGEGAYGEV) and lysine 51 contribute to the ATP site. Aspartate 143 (proton acceptor) is an active-site residue. The interval 335 to 360 (PTMRSDDDFNVRLGSGRSKEDGGDRQ) is disordered.

This sequence belongs to the protein kinase superfamily. CAMK Ser/Thr protein kinase family. NIM1 subfamily. In terms of processing, phosphorylated in a MEI-41/ATR dependent manner in response to DNA damage or the presence of unreplicated DNA.

The protein resides in the nucleus. The enzyme catalyses L-seryl-[protein] + ATP = O-phospho-L-seryl-[protein] + ADP + H(+). It catalyses the reaction L-threonyl-[protein] + ATP = O-phospho-L-threonyl-[protein] + ADP + H(+). Serine/threonine-protein kinase which is required for checkpoint-mediated cell cycle arrest and activation of DNA repair in response to the presence of DNA damage or unreplicated DNA. May also negatively regulate cell cycle progression during unperturbed cell cycles. May phosphorylate the CDC25 phosphatase stg, which promotes its degradation. This results in increased inhibitory tyrosine phosphorylation of Cdk1-cyclin complexes and consequent inhibition of cell cycle progression. In Drosophila melanogaster (Fruit fly), this protein is Serine/threonine-protein kinase grp.